The sequence spans 211 residues: SOSS complex subunit B1 (211 aa).

A DNA-binding region (OB) is located at residues 22-92 (IVLETGRVTK…TLYTGRGGDL (71 aa)). Residues 110-211 (EPNPEYSAQQ…GKETRRSSKR (102 aa)) are disordered. A compositionally biased stretch (polar residues) spans 115–128 (YSAQQAPNKTVQND). Composition is skewed to pro residues over residues 133-143 (APQPPTGPPAT) and 165-174 (PHPPHTPSHP).

This sequence belongs to the SOSS-B family. SOSS-B1 subfamily. As to quaternary structure, component of the SOSS complex, composed of SOSS-B (SOSS-B1/NABP2 or SOSS-B2/NABP1), SOSS-A/INTS3 and SOSS-C/INIP. SOSS complexes containing SOSS-B1/NABP2 are more abundant than complexes containing SOSS-B2/NABP1. Directly interacts with ATM, SOSS-A/INTS3 and RAD51. Interacts with INTS7. Phosphorylated by ATM in response to DNA damage. Phosphorylation prevents degradation by the proteasome, hence stabilization of the protein and accumulation within cells. Post-translationally, ubiquitinated in a FBXL5-dependent manner, leading to proteasomal degradation.

The protein localises to the nucleus. In terms of biological role, component of the SOSS complex, a multiprotein complex that functions downstream of the MRN complex to promote DNA repair and G2/M checkpoint. In the SOSS complex, acts as a sensor of single-stranded DNA that binds to single-stranded DNA, in particular to polypyrimidines. The SOSS complex associates with DNA lesions and influences diverse endpoints in the cellular DNA damage response including cell-cycle checkpoint activation, recombinational repair and maintenance of genomic stability. Required for efficient homologous recombination-dependent repair of double-strand breaks (DSBs) and ATM-dependent signaling pathways. The protein is SOSS complex subunit B1 (NABP2) of Bos taurus (Bovine).